The following is a 239-amino-acid chain: MLGSLSLLWLAAMTTSLVSQPQILTLEDYQEGEEDDVTVATPSLAVRCDYDRCRHLQVSCQELQKVGPVACLCPGLSREDQQPEPPRLGEVQIMAEEGYAVVHWCAPFSPVSHYWLLLWESNGAPQKSAPLNATVRRAELKGLKPGVAYVLCVVAANDAGESNVPGAEVEGPENWTGPSFGPCRKFIMPPKPVTLVYAAVGVGTALALLSCAALVWHFCLRERWGCPRRQGMAQASEAL.

The signal sequence occupies residues 1 to 19; that stretch reads MLGSLSLLWLAAMTTSLVS. Residues 20–194 lie on the Extracellular side of the membrane; the sequence is QPQILTLEDY…KFIMPPKPVT (175 aa). Residues 82 to 179 enclose the Fibronectin type-III domain; that stretch reads QPEPPRLGEV…EGPENWTGPS (98 aa). Asn132 and Asn174 each carry an N-linked (GlcNAc...) asparagine glycan. A helical membrane pass occupies residues 195 to 215; sequence LVYAAVGVGTALALLSCAALV. The Cytoplasmic segment spans residues 216 to 239; sequence WHFCLRERWGCPRRQGMAQASEAL.

It localises to the membrane. This Mus musculus (Mouse) protein is LRRN4 C-terminal-like protein (Lrrn4cl).